Here is a 220-residue protein sequence, read N- to C-terminus: UPF0319 protein YccT (220 aa).

Positions 1 to 20 (MKTGALTTFLALCLPVTVFA) are cleaved as a signal peptide.

This sequence belongs to the UPF0319 family.

The chain is UPF0319 protein YccT from Salmonella dublin (strain CT_02021853).